Reading from the N-terminus, the 90-residue chain is Large ribosomal subunit protein bL27 (90 aa).

Residues 1–20 (MAHKKAGGSSRNGRDSAGKR) form a disordered region.

This sequence belongs to the bacterial ribosomal protein bL27 family.

The sequence is that of Large ribosomal subunit protein bL27 from Rhodopseudomonas palustris (strain BisB18).